A 179-amino-acid polypeptide reads, in one-letter code: Large ribosomal subunit protein uL6 (179 aa).

The protein belongs to the universal ribosomal protein uL6 family. Part of the 50S ribosomal subunit.

This protein binds to the 23S rRNA, and is important in its secondary structure. It is located near the subunit interface in the base of the L7/L12 stalk, and near the tRNA binding site of the peptidyltransferase center. The protein is Large ribosomal subunit protein uL6 of Halothermothrix orenii (strain H 168 / OCM 544 / DSM 9562).